We begin with the raw amino-acid sequence, 158 residues long: Cytochrome c-type biogenesis protein CcmE (158 aa).

At 1–23 (MNSQSFKNFPSLKFISKKRRKER) the chain is on the cytoplasmic side. Residues 24–44 (LLMVLLCLFIMAITTGLIVYA) traverse the membrane as a helical; Signal-anchor for type II membrane protein segment. Over 45 to 158 (MRNTANFFRT…DRLKKHHDIK (114 aa)) the chain is Periplasmic. The heme site is built by H138 and Y142.

The protein belongs to the CcmE/CycJ family.

The protein resides in the cell inner membrane. In terms of biological role, heme chaperone required for the biogenesis of c-type cytochromes. Transiently binds heme delivered by CcmC and transfers the heme to apo-cytochromes in a process facilitated by CcmF and CcmH. The sequence is that of Cytochrome c-type biogenesis protein CcmE from Bartonella bacilliformis (strain ATCC 35685 / KC583 / Herrer 020/F12,63).